The chain runs to 301 residues: MKNLVLRRDNMGEVLNELFEILSKDLHFNATKLNSETYEQNWKVPEGFISIIGIENAKMPVFYYGITNSYKKEFEIKKVISPKGQKQIFARIYYIFDRRDIIEKEKYVVANAFNGLLLLIKFDKTEFIEKAIEMLTKGYEEDNFIKEVLNNIKEKNMFDNIDETIRFVANRDYNWLIGRIKYNMGILEYSGQGYYLIPIKTNMQITPGIKINNGRVIIDLENSHLFKNFIVYVDTINNKIIYNKERLCNKNPAILDIMSKIDDNTCPWCGAKLRVVRTKKGEFLGCTNYPNCLYRRFPKKN.

This is an uncharacterized protein from Methanocaldococcus jannaschii (strain ATCC 43067 / DSM 2661 / JAL-1 / JCM 10045 / NBRC 100440) (Methanococcus jannaschii).